The sequence spans 309 residues: 1,4-dihydroxy-2-naphthoyl-CoA synthase (309 aa).

Substrate is bound by residues R53, 98–102, Y110, 152–156, T179, S185, Y282, and K297; these read SGGDQ and WAAGG.

This sequence belongs to the enoyl-CoA hydratase/isomerase family. MenB subfamily.

The catalysed reaction is 2-succinylbenzoyl-CoA + H(+) = 1,4-dihydroxy-2-naphthoyl-CoA + H2O. The protein operates within quinol/quinone metabolism; 1,4-dihydroxy-2-naphthoate biosynthesis; 1,4-dihydroxy-2-naphthoate from chorismate: step 6/7. Its pathway is quinol/quinone metabolism; menaquinone biosynthesis. Its function is as follows. Converts o-succinylbenzoyl-CoA (OSB-CoA) to 1,4-dihydroxy-2-naphthoyl-CoA (DHNA-CoA). In Mycolicibacterium smegmatis (strain ATCC 700084 / mc(2)155) (Mycobacterium smegmatis), this protein is 1,4-dihydroxy-2-naphthoyl-CoA synthase.